Reading from the N-terminus, the 448-residue chain is Probable glycine dehydrogenase (decarboxylating) subunit 1 (448 aa).

This sequence belongs to the GcvP family. N-terminal subunit subfamily. In terms of assembly, the glycine cleavage system is composed of four proteins: P, T, L and H. In this organism, the P 'protein' is a heterodimer of two subunits.

It carries out the reaction N(6)-[(R)-lipoyl]-L-lysyl-[glycine-cleavage complex H protein] + glycine + H(+) = N(6)-[(R)-S(8)-aminomethyldihydrolipoyl]-L-lysyl-[glycine-cleavage complex H protein] + CO2. Its function is as follows. The glycine cleavage system catalyzes the degradation of glycine. The P protein binds the alpha-amino group of glycine through its pyridoxal phosphate cofactor; CO(2) is released and the remaining methylamine moiety is then transferred to the lipoamide cofactor of the H protein. The polypeptide is Probable glycine dehydrogenase (decarboxylating) subunit 1 (Parvibaculum lavamentivorans (strain DS-1 / DSM 13023 / NCIMB 13966)).